We begin with the raw amino-acid sequence, 472 residues long: Acyltransferase PapA3 (472 aa).

The protein belongs to the PapA acyltransferase family.

The catalysed reaction is a long-chain fatty acyl-CoA + alpha,alpha-trehalose = a 2-O-(long-chain fatty acyl)-alpha,alpha-trehalose + CoA. The enzyme catalyses a mycolipenoyl-CoA + a 2-O-(long-chain fatty acyl)-alpha,alpha-trehalose = a 2-O-(long-chain fatty acyl)-3-O-mycolipenoyl-trehalose + CoA. It carries out the reaction alpha,alpha-trehalose + hexadecanoyl-CoA = 2-O-hexadecanoyl-alpha,alpha-trehalose + CoA. It catalyses the reaction 2-O-hexadecanoyl-alpha,alpha-trehalose + hexadecanoyl-CoA = 2-O,3-O-dihexadecanoyl-alpha,alpha-trehalose + CoA. In terms of biological role, involved in the biosynthesis of polyacyltrehalose (PAT), a pentaacylated, trehalose-based glycolipid that could have a role in anchoring the bacterial capsule. Catalyzes the sequential transfer of two palmitoyl groups onto a single glucose residue of trehalose generating the diacylated product 2,3-diacyltrehalose (trehalose dipalmitate). This chain is Acyltransferase PapA3 (papA3), found in Mycobacterium tuberculosis (strain CDC 1551 / Oshkosh).